A 237-amino-acid chain; its full sequence is Ribonuclease PH (237 aa).

Phosphate contacts are provided by residues Arg-86 and 124–126 (GTR).

This sequence belongs to the RNase PH family. Homohexameric ring arranged as a trimer of dimers.

The enzyme catalyses tRNA(n+1) + phosphate = tRNA(n) + a ribonucleoside 5'-diphosphate. Phosphorolytic 3'-5' exoribonuclease that plays an important role in tRNA 3'-end maturation. Removes nucleotide residues following the 3'-CCA terminus of tRNAs; can also add nucleotides to the ends of RNA molecules by using nucleoside diphosphates as substrates, but this may not be physiologically important. Probably plays a role in initiation of 16S rRNA degradation (leading to ribosome degradation) during starvation. The polypeptide is Ribonuclease PH (Shewanella pealeana (strain ATCC 700345 / ANG-SQ1)).